The chain runs to 203 residues: uncharacterized protein (203 aa).

It belongs to the mimivirus L332/L333/L334 family.

This is an uncharacterized protein from Acanthamoeba polyphaga mimivirus (APMV).